Here is a 247-residue protein sequence, read N- to C-terminus: Probable transcriptional regulatory protein Swit_2142 (247 aa).

Basic residues predominate over residues 1–14 (MAGHSKFKNIMHRK). Positions 1–21 (MAGHSKFKNIMHRKGAQDKKR) are disordered.

This sequence belongs to the TACO1 family.

It localises to the cytoplasm. The chain is Probable transcriptional regulatory protein Swit_2142 from Rhizorhabdus wittichii (strain DSM 6014 / CCUG 31198 / JCM 15750 / NBRC 105917 / EY 4224 / RW1) (Sphingomonas wittichii).